Consider the following 366-residue polypeptide: A-type ATP synthase subunit C (366 aa).

This sequence belongs to the V-ATPase V0D/AC39 subunit family. As to quaternary structure, has multiple subunits with at least A(3), B(3), C, D, E, F, H, I and proteolipid K(x).

The protein resides in the cell membrane. Its function is as follows. Component of the A-type ATP synthase that produces ATP from ADP in the presence of a proton gradient across the membrane. This Thermococcus gammatolerans (strain DSM 15229 / JCM 11827 / EJ3) protein is A-type ATP synthase subunit C.